We begin with the raw amino-acid sequence, 255 residues long: Antigen LPMC-61 (255 aa).

12 tandem repeats follow at residues tryptophan 18–glutamine 48, tryptophan 49–leucine 57, tryptophan 58–glutamine 65, tryptophan 66–glutamine 78, tryptophan 79–glutamine 90, tryptophan 91–glutamine 103, tryptophan 104–glutamine 140, tryptophan 141–glutamine 152, tryptophan 153–glutamine 164, tryptophan 165–glutamine 172, tryptophan 173–glutamine 192, and tryptophan 193–glutamine 210. The segment at tryptophan 18–glutamine 90 is disordered. The segment at tryptophan 18 to glutamine 210 is 12 X approximate tandem repeats, Gln-rich. A compositionally biased stretch (low complexity) spans glutamine 149–glutamine 210. A disordered region spans residues glutamine 149–leucine 224.

In terms of assembly, may be covalently linked by disulfide bonds to other polypeptides to form the 80 kDa antigen.

In terms of biological role, unknown. The Gln-rich tandem repeats may be important for an unknown aspect of the parasitic life cycle. May be an important immunogen. The chain is Antigen LPMC-61 from Eimeria tenella (Coccidian parasite).